A 626-amino-acid chain; its full sequence is UvrABC system protein C (626 aa).

In terms of domain architecture, GIY-YIG spans 20–97 (ECSGVYKMLD…IKKFQPKFNI (78 aa)). In terms of domain architecture, UVR spans 207–242 (RELQENLSKKMQELSSQMRFEEAAEIRDRIKALSYV).

Belongs to the UvrC family. Interacts with UvrB in an incision complex.

It localises to the cytoplasm. The UvrABC repair system catalyzes the recognition and processing of DNA lesions. UvrC both incises the 5' and 3' sides of the lesion. The N-terminal half is responsible for the 3' incision and the C-terminal half is responsible for the 5' incision. This chain is UvrABC system protein C, found in Rickettsia typhi (strain ATCC VR-144 / Wilmington).